The chain runs to 361 residues: MYIKAIMLANYRNYNNLELNLSEGVNVFIGDNAQGKTNVLESIYYCAFAKSHRTSRDKDLINWKENEAYISLLVGKKRLDKRIDIKILRDGKKAIKVNSIKINKIGELFGTFNVVMFSPEDLKIIKESPGIRRKFLDMELCQISKKYYFNLVQYNKILNERNVILRSRDFNKDILEVYDLQLVECADYIVKERLEYIDKINYYGKFIHNEITSGKEDIVFKYDSGIKFKDDFKYAFLEKLKNNLLRDREQGITSIGPHRDDFNVLINNIDVKKFGSQGQQRTAVLTMKFSSLKIIKEITKEYPILLLDDVLSELDINRKRYVLSTLNDIQTIITCTGINDLEDYLDDKSKVFKVCNGEIVN.

30–37 (GDNAQGKT) is an ATP binding site.

Belongs to the RecF family.

The protein resides in the cytoplasm. Its function is as follows. The RecF protein is involved in DNA metabolism; it is required for DNA replication and normal SOS inducibility. RecF binds preferentially to single-stranded, linear DNA. It also seems to bind ATP. This is DNA replication and repair protein RecF from Clostridium botulinum (strain Eklund 17B / Type B).